The following is a 182-amino-acid chain: MDSCIQVFSVIANFDTDYNLSISFNTDFLEANVINILLLLLGLMYVLKEFLGSILVDRQEKVLLAIQESEERLKQANSRLSESEKQLAQTQMVIAQIIKEAETTAQKVRQSILDQGKADVDKLISASKASIATAEVQIKQQIQLQVTSLAIKRVTMQLQDQITPNIQTRIIDNNIAQLGGYL.

The helical transmembrane segment at 36–56 threads the bilayer; sequence ILLLLLGLMYVLKEFLGSILV.

This sequence belongs to the ATPase B chain family. As to quaternary structure, F-type ATPases have 2 components, F(1) - the catalytic core - and F(0) - the membrane proton channel. F(1) has five subunits: alpha(3), beta(3), gamma(1), delta(1), epsilon(1). F(0) has four main subunits: a(1), b(1), b'(1) and c(10-14). The alpha and beta chains form an alternating ring which encloses part of the gamma chain. F(1) is attached to F(0) by a central stalk formed by the gamma and epsilon chains, while a peripheral stalk is formed by the delta, b and b' chains.

The protein localises to the plastid. It is found in the chloroplast thylakoid membrane. In terms of biological role, f(1)F(0) ATP synthase produces ATP from ADP in the presence of a proton or sodium gradient. F-type ATPases consist of two structural domains, F(1) containing the extramembraneous catalytic core and F(0) containing the membrane proton channel, linked together by a central stalk and a peripheral stalk. During catalysis, ATP synthesis in the catalytic domain of F(1) is coupled via a rotary mechanism of the central stalk subunits to proton translocation. Its function is as follows. Component of the F(0) channel, it forms part of the peripheral stalk, linking F(1) to F(0). This Gracilaria tenuistipitata var. liui (Red alga) protein is ATP synthase subunit b, chloroplastic.